The primary structure comprises 151 residues: Zinc finger HIT domain-containing protein 3 (151 aa).

Residues cysteine 11, cysteine 14, cysteine 22, cysteine 25, cysteine 30, cysteine 34, histidine 38, and cysteine 42 each contribute to the Zn(2+) site. The HIT-type zinc-finger motif lies at cysteine 11–cysteine 42. Residues serine 43 to arginine 53 are compositionally biased toward basic and acidic residues. A disordered region spans residues serine 43 to aspartate 81. Over residues serine 63 to aspartate 81 the composition is skewed to acidic residues. Serine 76 is subject to Phosphoserine.

As to quaternary structure, thyroid receptor interacting proteins (TRIPs) specifically interact with the ligand binding domain of the thyroid receptor (TR). Requires the presence of thyroid hormone for its interaction. Interacts with NUFIP1. Interacts (via HIT-type zinc finger) with the RUVBL1/RUVBL2 complex in the presence of ADP. In terms of tissue distribution, expressed in the cerebellum.

It localises to the cytoplasm. The protein resides in the nucleus. The protein is Zinc finger HIT domain-containing protein 3 (Znhit3) of Mus musculus (Mouse).